Here is a 1609-residue protein sequence, read N- to C-terminus: MNPFESLPDAARPAQGTRPNRSDGPPPLPPLTIPGSTGRPQNPIFSPPPNLHHILPPGYLPQQQQQQQQQQQQQQQRSQQPFFSPPPPDAMSPPLGSHQAYLNSTSSQPTQRLPGISFQEPQRMPVQRSGPSRDSVKSYGDDKRSINDPNSSSTALTQVNSLDPESGFSAHNDTFRRKKSLVRPDRERMDPSHRQWYYRNHAAHMDVMAASGGRVGYMPSTTGHLPQHGAAPHGSGMAGIVGPGGGLSGLGVTGPTNVPPGGLGRAPPLRRGKSLLGRDEDQVETGINVLKRGVSLRRKQSKSGNKPSKEVPRDLGESKTSRIAPGPVGGWMIYCYILTICCPGPFLRIFGIRTPEQQRAWREKMGLIGIITLIMAAVGFLTFGFTQTVCGQQPDRYTLGTIDVGSMTFNGYDYSFDGFIHPQVGPFGADTIYNRTNPIYSEPWSSGGQDGSLLFQKIGAACTGIISNRAGGAQPERYFDCTLVRQDGKGGYANSTMPMCHTGSIVDQFNDGAQPRNSVLKKRGQVSLQWNNVTDPARNLAVYRGSVLDLNRLNNLTTGLSYPELYDTLKRRNDSWAGRDVTSAVMRQRLEREFQCLEQITRVGFIDSETIGCVASKVELYLSLVFIIGVVAIKFFMAVMFGWFISWRLGNYANETYEQRMKRAAEIEQWSDDIYRPAPAGYRPNARKHKSFLPAKSRFSVADPLSLKSGSRAPMPLSEKRMTRASRLGVASPLGGSPPGSPSVAGGRSSASLAPAHSRRSSFSGSPAEGAMGVCPFPLHNTIPQPGPDYRPFGFQLAHSICLVTAYSESFEGLRTTLDSLATTDYPNSHKLLLVIADGIVKGAGSDISTPDICLSMMKDLVIPAEEVEGNSYVAIADGYKRHNMCKIYAGFYDYDDETVERSKQQRVPMILVAKCGTPLEADSAKPGNRGKRDSQVLLMAFMQKVMFDERMTAFEYEFFNSIWRVTGVSPDNYEIVLCVDADTKVFPDSLSRMVACMVEDPEIMGLCGETKIANKSETWVTMIQVFEYYISHHQTKAFEACFGGVTCLPGCFSAYRIKAPKGPHGYWVPILANPDIVEHYSENVVDTLHKKNLLLLGEDRYLTTLMLKTFPKRKMMFVPQAVCKTIVPDTFRILLSQRRRWINSTVHNLFELVMVNDLCGTFCFSMRFVVFMELTGTLVLPAAIAFTLYVVVQAFLPNVPTPTIPLILLALILGLPGILIVVTSRKIAYVGWMLIYLLSLPIWNFVLPLYAYWHMDDFSWGATRVVQGENKKDNHGDADGKFDPSHIVMKRWAEFERERRWKSGTHSRDSTYDVVQRTGSPERAGSTRYSVVSSDTFHSSPFGQHDQFGRALPNAMSSSSASQFGPDVSEVSHSKSPSGARARLDAVPLLELPAPLATDAKHRSGASPTGTVVVPRPRATSPAPLPHNSGHPALGSVSAFSPTQHSAGRLPTLPGAATYEAYPHTDAADEERRPMIGSTSSSPDPEPRRYIGPDAGVRHGNVSTEQRYPTVSESAYPMQAYTAEPETDGSASPTPAQQGFNAANSNQQTRPLTRGFSLVDDGPVASAQGVRQVQRGARRSQMPNSAASPPPANRTGNLPPGAAPPSFD.

Disordered regions lie at residues 1 to 188, 248 to 280, and 294 to 320; these read MNPF…DRER, SGLG…GRDE, and VSLR…ESKT. Residues 1-326 lie on the Cytoplasmic side of the membrane; sequence MNPFESLPDA…ESKTSRIAPG (326 aa). Residues 34-44 show a composition bias toward polar residues; sequence PGSTGRPQNPI. Positions 61–82 are enriched in low complexity; the sequence is PQQQQQQQQQQQQQQQRSQQPF. Over residues 100–111 the composition is skewed to polar residues; sequence AYLNSTSSQPTQ. Residues 134 to 146 are compositionally biased toward basic and acidic residues; it reads DSVKSYGDDKRSI. The segment covering 147–163 has biased composition (polar residues); the sequence is NDPNSSSTALTQVNSLD. The span at 253–267 shows a compositional bias: low complexity; it reads TGPTNVPPGGLGRAP. Residues 307–320 are compositionally biased toward basic and acidic residues; it reads PSKEVPRDLGESKT. Residues 327–347 traverse the membrane as a helical segment; the sequence is PVGGWMIYCYILTICCPGPFL. Topologically, residues 348–364 are extracellular; the sequence is RIFGIRTPEQQRAWREK. Residues 365 to 385 traverse the membrane as a helical segment; that stretch reads MGLIGIITLIMAAVGFLTFGF. Topologically, residues 386–624 are cytoplasmic; the sequence is TQTVCGQQPD…ASKVELYLSL (239 aa). The helical transmembrane segment at 625 to 645 threads the bilayer; that stretch reads VFIIGVVAIKFFMAVMFGWFI. At 646-1176 the chain is on the extracellular side; it reads SWRLGNYANE…MRFVVFMELT (531 aa). Asn654 is a glycosylation site (N-linked (GlcNAc...) asparagine). Residues 729-767 form a disordered region; the sequence is GVASPLGGSPPGSPSVAGGRSSASLAPAHSRRSSFSGSP. Low complexity predominate over residues 742–752; sequence PSVAGGRSSAS. N-linked (GlcNAc...) asparagine glycans are attached at residues Asn1015 and Asn1144. The helical transmembrane segment at 1177–1197 threads the bilayer; it reads GTLVLPAAIAFTLYVVVQAFL. Over 1198–1202 the chain is Cytoplasmic; it reads PNVPT. The helical transmembrane segment at 1203-1223 threads the bilayer; the sequence is PTIPLILLALILGLPGILIVV. The Extracellular segment spans residues 1224-1227; it reads TSRK. A helical membrane pass occupies residues 1228–1248; sequence IAYVGWMLIYLLSLPIWNFVL. Topologically, residues 1249 to 1609 are cytoplasmic; it reads PLYAYWHMDD…PPGAAPPSFD (361 aa). Disordered regions lie at residues 1354-1381 and 1399-1609; these read PNAM…PSGA and TDAK…PSFD. 2 stretches are compositionally biased toward polar residues: residues 1502–1514 and 1530–1552; these read NVST…TVSE and GSAS…QTRP. Low complexity predominate over residues 1568 to 1588; it reads AQGVRQVQRGARRSQMPNSAA.

It belongs to the chitin synthase family. Class IV subfamily.

It is found in the cell membrane. It localises to the cytoplasmic vesicle membrane. The enzyme catalyses [(1-&gt;4)-N-acetyl-beta-D-glucosaminyl](n) + UDP-N-acetyl-alpha-D-glucosamine = [(1-&gt;4)-N-acetyl-beta-D-glucosaminyl](n+1) + UDP + H(+). Polymerizes chitin, a structural polymer of the cell wall and septum, by transferring the sugar moiety of UDP-GlcNAc to the non-reducing end of the growing chitin polymer. The polypeptide is Chitin synthase 5 (Mycosarcoma maydis (Corn smut fungus)).